The primary structure comprises 284 residues: 4-diphosphocytidyl-2-C-methyl-D-erythritol kinase (284 aa).

K14 is a catalytic residue. 98 to 108 (PMGGGLGGGSS) contributes to the ATP binding site. D140 is a catalytic residue.

This sequence belongs to the GHMP kinase family. IspE subfamily.

The catalysed reaction is 4-CDP-2-C-methyl-D-erythritol + ATP = 4-CDP-2-C-methyl-D-erythritol 2-phosphate + ADP + H(+). The protein operates within isoprenoid biosynthesis; isopentenyl diphosphate biosynthesis via DXP pathway; isopentenyl diphosphate from 1-deoxy-D-xylulose 5-phosphate: step 3/6. Catalyzes the phosphorylation of the position 2 hydroxy group of 4-diphosphocytidyl-2C-methyl-D-erythritol. In Shewanella halifaxensis (strain HAW-EB4), this protein is 4-diphosphocytidyl-2-C-methyl-D-erythritol kinase.